Consider the following 330-residue polypeptide: Thiosulfate transporter TsuA (330 aa).

Residues methionine 1–isoleucine 2 are Periplasmic-facing. Residues tryptophan 3–arginine 18 traverse the membrane as a helical segment. Residues glycine 19–asparagine 36 lie on the Cytoplasmic side of the membrane. Residues tyrosine 37–valine 59 traverse the membrane as a helical segment. The Periplasmic portion of the chain corresponds to glycine 60–asparagine 70. A helical membrane pass occupies residues leucine 71–leucine 87. Residues alanine 88–glycine 102 lie on the Cytoplasmic side of the membrane. A helical membrane pass occupies residues leucine 103 to lysine 121. The Periplasmic portion of the chain corresponds to serine 122–asparagine 162. The helical transmembrane segment at proline 163–glycine 180 threads the bilayer. The Cytoplasmic portion of the chain corresponds to threonine 181–lysine 189. The helical transmembrane segment at phenylalanine 190–threonine 211 threads the bilayer. Over leucine 212 to asparagine 239 the chain is Periplasmic. A helical membrane pass occupies residues tryptophan 240–valine 258. Over alanine 259–asparagine 269 the chain is Cytoplasmic. Residues proline 270–threonine 289 form a helical membrane-spanning segment. The Periplasmic segment spans residues alanine 290 to alanine 306. A helical membrane pass occupies residues leucine 307–isoleucine 326. The Cytoplasmic segment spans residues leucine 327–arginine 330.

Belongs to the TsuA/YedE (TC 9.B.102) family.

The protein localises to the cell inner membrane. It carries out the reaction thiosulfate(in) = thiosulfate(out). In terms of biological role, mediates thiosulfate uptake. The sequence is that of Thiosulfate transporter TsuA from Spirochaeta thermophila (strain ATCC 700085 / DSM 6578 / Z-1203).